A 233-amino-acid polypeptide reads, in one-letter code: Small ribosomal subunit protein uS3 (233 aa).

The 69-residue stretch at 39–107 (VRKYLTKELE…PAQINIAEVR (69 aa)) folds into the KH type-2 domain. The tract at residues 214–233 (VEQPEKPSAQPKKQQRKGRK) is disordered.

It belongs to the universal ribosomal protein uS3 family. In terms of assembly, part of the 30S ribosomal subunit. Forms a tight complex with proteins S10 and S14.

In terms of biological role, binds the lower part of the 30S subunit head. Binds mRNA in the 70S ribosome, positioning it for translation. This is Small ribosomal subunit protein uS3 from Pectobacterium atrosepticum (strain SCRI 1043 / ATCC BAA-672) (Erwinia carotovora subsp. atroseptica).